The sequence spans 297 residues: Magnetosome protein MamB (297 aa).

The Cytoplasmic segment spans residues 1 to 12; the sequence is MKFENCRDCREE. The segment at 1–214 is transmembrane domain (TMD); that stretch reads MKFENCRDCR…GLMDSSVDTE (214 aa). The helical transmembrane segment at 13–33 threads the bilayer; that stretch reads VVWWAFTADICMTLFKGILGL. Over 34–83 the chain is Lumenal; sequence MSGSVALVADSLHSGADVVASGVTQLSLKISNKPADERYPFGYGNIQYIS. The helical transmembrane segment at 84 to 104 threads the bilayer; it reads SAIVGSLLLIGASFLMYGSVV. Residues 105-112 lie on the Cytoplasmic side of the membrane; that stretch reads KLISGTYE. Residues 113-133 form a helical membrane-spanning segment; sequence APSIFAALGASVTVIVNELMY. The Lumenal portion of the chain corresponds to 134 to 164; that stretch reads RYQICVGNENNSPAIIANAWDNRSDAISSAA. Residues 165–185 traverse the membrane as a helical segment; it reads VMVGVIASVIGFPIADTIAAI. At 186–297 the chain is on the cytoplasmic side; sequence GVSALVGHIG…PAPAAVTVRV (112 aa). A C-terminal domain (CTD) region spans residues 215-297; sequence LLQTAWQIAT…PAPAAVTVRV (83 aa).

Belongs to the cation diffusion facilitator (CDF) transporter (TC 2.A.4) family. As to quaternary structure, forms homodimers via its C-terminal domain, may form higher order multimers that are sensitive to reducing agent. Probably interacts with MamE. Interacts with MamM via their C-terminal domains.

It localises to the cell inner membrane. It is found in the magnetosome membrane. Functionally, plays a dual, essential role in magnetosome formation; required for magnetosome vesicle formation as well as biomineralization. Requires heterodimerization with MamM for stability. Probably binds and transports iron. One of 7 genes (mamLQBIEMO) able to induce magnetosome membrane biogenesis; coexpression of mamLQRBIEMO in a deletion of the 17 gene mamAB operon restores magnetosome vesicle formation but not magnetite biosynthesis. This is Magnetosome protein MamB from Magnetospirillum gryphiswaldense (strain DSM 6361 / JCM 21280 / NBRC 15271 / MSR-1).